Here is a 418-residue protein sequence, read N- to C-terminus: Transmembrane protease serine 11A (418 aa).

The Cytoplasmic segment spans residues M1–W18. A helical; Signal-anchor for type II membrane protein membrane pass occupies residues M19–V39. At H40–I418 the chain is on the extracellular side. An SEA domain is found at K47–S164. The N-linked (GlcNAc...) asparagine glycan is linked to N153. Positions I187–G417 constitute a Peptidase S1 domain. C212 and C228 are joined by a disulfide. Residues H227 and D272 each act as charge relay system in the active site. An N-linked (GlcNAc...) asparagine glycan is attached at N303. 2 cysteine pairs are disulfide-bonded: C337–C353 and C364–C393. The active-site Charge relay system is S368.

It belongs to the peptidase S1 family. In terms of assembly, may interact with ZBTB17. As to expression, expressed in esophagus, liver, colon and lung. Down-regulated in esophagus cancers.

The protein resides in the membrane. In terms of biological role, probable serine protease which may play a role in cellular senescence. Overexpression inhibits cell growth and induce G1 cell cycle arrest. The chain is Transmembrane protease serine 11A (TMPRSS11A) from Homo sapiens (Human).